The primary structure comprises 142 residues: Hemoglobin subunit alpha (142 aa).

Positions 2-142 (VLSAADKTNV…VSTVLTSKYR (141 aa)) constitute a Globin domain. Ser-4 carries the post-translational modification Phosphoserine. Lys-8 bears the N6-succinyllysine mark. Position 9 is a phosphothreonine (Thr-9). Lys-12 carries the post-translational modification N6-succinyllysine. Lys-17 carries the post-translational modification N6-acetyllysine; alternate. Lys-17 carries the N6-succinyllysine; alternate modification. Tyr-25 is modified (phosphotyrosine). At Lys-41 the chain carries N6-succinyllysine. Ser-50 is modified (phosphoserine). An O2-binding site is contributed by His-59. His-88 provides a ligand contact to heme b. Ser-103 bears the Phosphoserine mark. Thr-109 bears the Phosphothreonine mark. Phosphoserine is present on residues Ser-125 and Ser-132. A phosphothreonine mark is found at Thr-135 and Thr-138. Ser-139 bears the Phosphoserine mark.

This sequence belongs to the globin family. As to quaternary structure, heterotetramer of two alpha chains and two beta chains. Red blood cells.

In terms of biological role, involved in oxygen transport from the lung to the various peripheral tissues. Functionally, hemopressin acts as an antagonist peptide of the cannabinoid receptor CNR1. Hemopressin-binding efficiently blocks cannabinoid receptor CNR1 and subsequent signaling. The sequence is that of Hemoglobin subunit alpha (HBA) from Equus caballus (Horse).